Reading from the N-terminus, the 329-residue chain is Probable alpha-1,2-galactosyltransferase gmh1 (329 aa).

The Cytoplasmic segment spans residues 1–14; that stretch reads MLSFFTKNTLTKRK. Residues 15-35 form a helical; Signal-anchor for type II membrane protein membrane-spanning segment; the sequence is LIMLALAIVFTFFAFGLYFIP. Over 36–329 the chain is Lumenal; sequence HDEISVFDFK…LWTKYKDKII (294 aa). N-linked (GlcNAc...) asparagine glycans are attached at residues Asn127 and Asn169.

Belongs to the glycosyltransferase 34 family.

It is found in the golgi apparatus membrane. This Schizosaccharomyces pombe (strain 972 / ATCC 24843) (Fission yeast) protein is Probable alpha-1,2-galactosyltransferase gmh1 (gmh1).